A 478-amino-acid polypeptide reads, in one-letter code: Kynureninase (478 aa).

Pyridoxal 5'-phosphate contacts are provided by residues Leu150, Thr151, Phe178 to Asp181, Ser234, Asp263, His266, and Tyr288. The residue at position 289 (Lys289) is an N6-(pyridoxal phosphate)lysine. 2 residues coordinate pyridoxal 5'-phosphate: Trp318 and Asn346.

The protein belongs to the kynureninase family. As to quaternary structure, homodimer. Pyridoxal 5'-phosphate is required as a cofactor.

It is found in the cytoplasm. The catalysed reaction is L-kynurenine + H2O = anthranilate + L-alanine + H(+). It catalyses the reaction 3-hydroxy-L-kynurenine + H2O = 3-hydroxyanthranilate + L-alanine + H(+). Its pathway is amino-acid degradation; L-kynurenine degradation; L-alanine and anthranilate from L-kynurenine: step 1/1. It participates in cofactor biosynthesis; NAD(+) biosynthesis; quinolinate from L-kynurenine: step 2/3. In terms of biological role, catalyzes the cleavage of L-kynurenine (L-Kyn) and L-3-hydroxykynurenine (L-3OHKyn) into anthranilic acid (AA) and 3-hydroxyanthranilic acid (3-OHAA), respectively. The sequence is that of Kynureninase from Caenorhabditis elegans.